Here is a 328-residue protein sequence, read N- to C-terminus: NADH-quinone oxidoreductase subunit H (328 aa).

8 helical membrane passes run Ile10–Phe30, Ile80–Pro100, Ile118–Gly138, Ala155–Val175, Ile191–Phe211, Leu243–Phe263, Leu272–Thr292, and Trp306–Val326.

This sequence belongs to the complex I subunit 1 family. As to quaternary structure, NDH-1 is composed of 14 different subunits. Subunits NuoA, H, J, K, L, M, N constitute the membrane sector of the complex.

The protein localises to the cell inner membrane. It catalyses the reaction a quinone + NADH + 5 H(+)(in) = a quinol + NAD(+) + 4 H(+)(out). NDH-1 shuttles electrons from NADH, via FMN and iron-sulfur (Fe-S) centers, to quinones in the respiratory chain. The immediate electron acceptor for the enzyme in this species is believed to be ubiquinone. Couples the redox reaction to proton translocation (for every two electrons transferred, four hydrogen ions are translocated across the cytoplasmic membrane), and thus conserves the redox energy in a proton gradient. This subunit may bind ubiquinone. The sequence is that of NADH-quinone oxidoreductase subunit H from Sulfurimonas denitrificans (strain ATCC 33889 / DSM 1251) (Thiomicrospira denitrificans (strain ATCC 33889 / DSM 1251)).